The primary structure comprises 294 residues: S-adenosylmethionine uptake transporter (294 aa).

The next 10 membrane-spanning stretches (helical) occupy residues 8 to 28 (YLTGIGWFLLSLVSSSANDVI), 41 to 61 (VAFFRFFFSSIVLLPFVVYYG), 74 to 91 (ILRGLLLFFGMTSWTYGL), 98 to 118 (TATVVSFSIPLFTLILAVFFL), 121 to 141 (NIIWPRWVVTVVGFIGLVVTL), 148 to 168 (FNPEILYFVLAAISFAMLDII), 177 to 197 (SMISMLFYSAIVTAIVSLPVA), 207 to 227 (FELALLFVLGSSGSLILFFLL), 237 to 257 (ATAPYRYLELVISVIAAYFIF), and 260 to 280 (FPDKSTLHGAVIIIPTTLFII). EamA domains follow at residues 21–141 (SSSA…VVTL) and 160–280 (ISFA…LFII).

This sequence belongs to the drug/metabolite transporter (DMT) superfamily. 10 TMS drug/metabolite exporter (DME) (TC 2.A.7.3) family.

The protein localises to the cell inner membrane. In terms of biological role, transports S-adenosylmethionine. The protein is S-adenosylmethionine uptake transporter (sam) of Rickettsia conorii (strain ATCC VR-613 / Malish 7).